A 157-amino-acid polypeptide reads, in one-letter code: 2-C-methyl-D-erythritol 2,4-cyclodiphosphate synthase (157 aa).

A divalent metal cation-binding residues include Asp9 and His11. Residues 9–11 (DVH) and 35–36 (HS) contribute to the 4-CDP-2-C-methyl-D-erythritol 2-phosphate site. Residue His43 participates in a divalent metal cation binding. 4-CDP-2-C-methyl-D-erythritol 2-phosphate is bound by residues 57-59 (DIG), 62-66 (FPDTD), 101-107 (AEKPKMA), 133-136 (TTTE), Phe140, and Arg143.

The protein belongs to the IspF family. In terms of assembly, homotrimer. The cofactor is a divalent metal cation.

It catalyses the reaction 4-CDP-2-C-methyl-D-erythritol 2-phosphate = 2-C-methyl-D-erythritol 2,4-cyclic diphosphate + CMP. It participates in isoprenoid biosynthesis; isopentenyl diphosphate biosynthesis via DXP pathway; isopentenyl diphosphate from 1-deoxy-D-xylulose 5-phosphate: step 4/6. Functionally, involved in the biosynthesis of isopentenyl diphosphate (IPP) and dimethylallyl diphosphate (DMAPP), two major building blocks of isoprenoid compounds. Catalyzes the conversion of 4-diphosphocytidyl-2-C-methyl-D-erythritol 2-phosphate (CDP-ME2P) to 2-C-methyl-D-erythritol 2,4-cyclodiphosphate (ME-CPP) with a corresponding release of cytidine 5-monophosphate (CMP). The protein is 2-C-methyl-D-erythritol 2,4-cyclodiphosphate synthase of Listeria monocytogenes serotype 4a (strain HCC23).